Consider the following 229-residue polypeptide: UPF0319 protein Sbal223_2728 (229 aa).

The first 21 residues, 1-21 (MKSLLPISSLLVLLGSASAFA), serve as a signal peptide directing secretion.

Belongs to the UPF0319 family.

The sequence is that of UPF0319 protein Sbal223_2728 from Shewanella baltica (strain OS223).